The sequence spans 534 residues: CTP synthase (534 aa).

The amidoligase domain stretch occupies residues 1–265; the sequence is MKYIIVTGGV…SNYLLKKLIL (265 aa). Ser12 is a CTP binding site. Position 12 (Ser12) interacts with UTP. 13 to 18 lines the ATP pocket; it reads GLGKGI. Residue Tyr53 participates in L-glutamine binding. ATP is bound at residue Asp70. Asp70 and Glu140 together coordinate Mg(2+). Residues 147-149, 186-191, and Lys222 contribute to the CTP site; these read DIE and KTKPTQ. UTP contacts are provided by residues 186-191 and Lys222; that span reads KTKPTQ. The 242-residue stretch at 289–530 folds into the Glutamine amidotransferase type-1 domain; sequence NVAIVGKYTH…MGAMLKKSKE (242 aa). Gly352 serves as a coordination point for L-glutamine. Residue Cys379 is the Nucleophile; for glutamine hydrolysis of the active site. Residues 380–383, Glu403, and Arg460 contribute to the L-glutamine site; that span reads LGMQ. Active-site residues include His503 and Glu505.

This sequence belongs to the CTP synthase family. In terms of assembly, homotetramer.

The catalysed reaction is UTP + L-glutamine + ATP + H2O = CTP + L-glutamate + ADP + phosphate + 2 H(+). The enzyme catalyses L-glutamine + H2O = L-glutamate + NH4(+). It catalyses the reaction UTP + NH4(+) + ATP = CTP + ADP + phosphate + 2 H(+). It participates in pyrimidine metabolism; CTP biosynthesis via de novo pathway; CTP from UDP: step 2/2. Its activity is regulated as follows. Allosterically activated by GTP, when glutamine is the substrate; GTP has no effect on the reaction when ammonia is the substrate. The allosteric effector GTP functions by stabilizing the protein conformation that binds the tetrahedral intermediate(s) formed during glutamine hydrolysis. Inhibited by the product CTP, via allosteric rather than competitive inhibition. Its function is as follows. Catalyzes the ATP-dependent amination of UTP to CTP with either L-glutamine or ammonia as the source of nitrogen. Regulates intracellular CTP levels through interactions with the four ribonucleotide triphosphates. This is CTP synthase from Methanococcoides burtonii (strain DSM 6242 / NBRC 107633 / OCM 468 / ACE-M).